Here is a 478-residue protein sequence, read N- to C-terminus: Catalase easC (478 aa).

Residue His54 is part of the active site. Tyr343 provides a ligand contact to heme. The tract at residues 459 to 478 (VAEKARPDSPSRAQPGQLRL) is disordered.

This sequence belongs to the catalase family. It depends on heme as a cofactor.

It participates in alkaloid biosynthesis; ergot alkaloid biosynthesis. In terms of biological role, catalase; part of the gene cluster that mediates the biosynthesis of fungal ergot alkaloid. DmaW catalyzes the first step of ergot alkaloid biosynthesis by condensing dimethylallyl diphosphate (DMAP) and tryptophan to form 4-dimethylallyl-L-tryptophan. The second step is catalyzed by the methyltransferase easF that methylates 4-dimethylallyl-L-tryptophan in the presence of S-adenosyl-L-methionine, resulting in the formation of 4-dimethylallyl-L-abrine. The catalase easC and the FAD-dependent oxidoreductase easE then transform 4-dimethylallyl-L-abrine to chanoclavine-I which is further oxidized by easD in the presence of NAD(+), resulting in the formation of chanoclavine-I aldehyde. Chanoclavine-I aldehyde is the precursor of ergoamides and ergopeptines in Clavicipitaceae, and clavine-type alcaloids such as fumiclavine in Trichocomaceae. However, the metabolites downstream of chanoclavine-I aldehyde in Arthrodermataceae have not been identified yet. The sequence is that of Catalase easC from Trichophyton verrucosum (strain HKI 0517).